The chain runs to 369 residues: Bi-functional coumaroyl CoA and feruloyl CoA ortho-hydroxylase Diox1 (369 aa).

The 111-residue stretch at Ile-209–Pro-319 folds into the Fe2OG dioxygenase domain. Tyr-225 is a binding site for 2-oxoglutarate. Positions 240, 242, and 300 each coordinate Fe cation. The 2-oxoglutarate site is built by Arg-310 and Ser-312.

The protein belongs to the iron/ascorbate-dependent oxidoreductase family. L-ascorbate is required as a cofactor. The cofactor is Fe(2+).

It catalyses the reaction (E)-4-coumaroyl-CoA + 2-oxoglutarate + O2 = (E)-2,4-dihydroxycinnamoyl-CoA + succinate + CO2. The catalysed reaction is (E)-feruloyl-CoA + 2-oxoglutarate + O2 = (E)-6-hydroxyferuloyl-CoA + succinate + CO2. The protein operates within phenylpropanoid metabolism. Functionally, 2-oxoglutarate (OG)- and Fe(II)-dependent dioxygenase (2OGD) involved in scopoletin and umbelliferone biosynthesis. Converts feruloyl CoA into 6'-hydroxyferuloyl CoA, and p-coumaroyl CoA into 2,4-dihydroxycinnamoyl-CoA. This chain is Bi-functional coumaroyl CoA and feruloyl CoA ortho-hydroxylase Diox1, found in Ruta graveolens (Common rue).